The chain runs to 359 residues: 3-dehydroquinate synthase (359 aa).

NAD(+) contacts are provided by residues 72-77, 106-110, 130-131, K143, K152, and 170-173; these read EGEIHK, GVIGD, TS, and CLKT. Zn(2+)-binding residues include E185, H248, and H264.

Belongs to the sugar phosphate cyclases superfamily. Dehydroquinate synthase family. Co(2+) is required as a cofactor. It depends on Zn(2+) as a cofactor. The cofactor is NAD(+).

The protein localises to the cytoplasm. The catalysed reaction is 7-phospho-2-dehydro-3-deoxy-D-arabino-heptonate = 3-dehydroquinate + phosphate. The protein operates within metabolic intermediate biosynthesis; chorismate biosynthesis; chorismate from D-erythrose 4-phosphate and phosphoenolpyruvate: step 2/7. In terms of biological role, catalyzes the conversion of 3-deoxy-D-arabino-heptulosonate 7-phosphate (DAHP) to dehydroquinate (DHQ). The chain is 3-dehydroquinate synthase from Dehalococcoides mccartyi (strain CBDB1).